Reading from the N-terminus, the 186-residue chain is Oligoribonuclease (186 aa).

The Exonuclease domain maps to 8-171 (LIWIDLEMTG…DDIRESIAEL (164 aa)). Y129 is a catalytic residue.

The protein belongs to the oligoribonuclease family.

It localises to the cytoplasm. 3'-to-5' exoribonuclease specific for small oligoribonucleotides. This Mannheimia succiniciproducens (strain KCTC 0769BP / MBEL55E) protein is Oligoribonuclease.